Reading from the N-terminus, the 319-residue chain is Annexin A5 (319 aa).

Alanine 2 is modified (N-acetylalanine). Annexin repeat units lie at residues 13 to 84 (FDGR…ALMK), 85 to 156 (PSRL…VLLQ), 168 to 240 (AQVE…AVVK), and 244 to 315 (SIPA…LLCG). Residue lysine 27 forms a Glycyl lysine isopeptide (Lys-Gly) (interchain with G-Cter in SUMO1); alternate linkage. Residue lysine 27 forms a Glycyl lysine isopeptide (Lys-Gly) (interchain with G-Cter in SUMO2); alternate linkage. Serine 35 is subject to Phosphoserine. Residues lysine 68, lysine 74, lysine 77, lysine 95, and lysine 99 each carry the N6-acetyllysine modification. N6-succinyllysine is present on lysine 288. Residues 312 to 318 (LLCGGED) carry the [IL]-x-C-x-x-[DE] motif motif.

The protein belongs to the annexin family. Monomer. Binds ATRX, EIF5B and DNMT1. S-nitrosylation is induced by interferon-gamma and oxidatively-modified low-densitity lipoprotein (LDL(ox)) possibly implicating the iNOS-S100A8/9 transnitrosylase complex.

This protein is an anticoagulant protein that acts as an indirect inhibitor of the thromboplastin-specific complex, which is involved in the blood coagulation cascade. This chain is Annexin A5 (Anxa5), found in Rattus norvegicus (Rat).